We begin with the raw amino-acid sequence, 318 residues long: Beta-sarcoglycan (318 aa).

A disordered region spans residues 1 to 32 (MAAAAAAAAEQQSSNGPVKKSMREKAVERRNV). The Cytoplasmic segment spans residues 1-65 (MAAAAAAAAE…GLRGRKGNLA (65 aa)). Positions 21-32 (SMREKAVERRNV) are enriched in basic and acidic residues. Residues 66–86 (ICVIVLLFLLAVINLIITLVI) form a helical; Signal-anchor for type II membrane protein membrane-spanning segment. The Extracellular portion of the chain corresponds to 87–318 (WAVIRIGPNG…VSDNPCGNTH (232 aa)). 3 N-linked (GlcNAc...) asparagine glycosylation sites follow: Asn158, Asn211, and Asn258. 2 disulfides stabilise this stretch: Cys288/Cys314 and Cys290/Cys307.

It belongs to the sarcoglycan beta/delta/gamma/zeta family. As to quaternary structure, cross-link to form 2 major subcomplexes: one consisting of SGCB, SGCD and SGCG and the other consisting of SGCB and SGCD. The association between SGCB and SGCG is particularly strong while SGCA is loosely associated with the other sarcoglycans. In terms of processing, disulfide bonds are present.

The protein localises to the cell membrane. The protein resides in the sarcolemma. Its subcellular location is the cytoplasm. It is found in the cytoskeleton. In terms of biological role, component of the sarcoglycan complex, a subcomplex of the dystrophin-glycoprotein complex which forms a link between the F-actin cytoskeleton and the extracellular matrix. This chain is Beta-sarcoglycan (SGCB), found in Oryctolagus cuniculus (Rabbit).